The sequence spans 186 residues: Ribosome-recycling factor (186 aa).

It belongs to the RRF family.

It is found in the cytoplasm. Functionally, responsible for the release of ribosomes from messenger RNA at the termination of protein biosynthesis. May increase the efficiency of translation by recycling ribosomes from one round of translation to another. This chain is Ribosome-recycling factor, found in Rickettsia bellii (strain OSU 85-389).